Reading from the N-terminus, the 475-residue chain is Ankyrin repeat, SAM and basic leucine zipper domain-containing protein 1 (475 aa).

Residues methionine 1–tryptophan 25 are disordered. Phosphoserine occurs at positions 17, 18, and 20. ANK repeat units follow at residues glutamate 45–serine 74, tyrosine 78–phenylalanine 107, aspartate 110–valine 144, arginine 148–threonine 177, asparagine 181–leucine 210, and aspartate 214–glycine 243. The 63-residue stretch at serine 272–glutamine 334 folds into the SAM domain.

In terms of assembly, interacts with DDX4, PIWIL1, RANBP9 and TDRD1.

Its subcellular location is the cytoplasm. Functionally, plays a central role during spermatogenesis by repressing transposable elements and preventing their mobilization, which is essential for the germline integrity. Acts via the piRNA metabolic process, which mediates the repression of transposable elements during meiosis by forming complexes composed of piRNAs and Piwi proteins and governs the methylation and subsequent repression of transposons. Its association with pi-bodies suggests a participation in the primary piRNAs metabolic process. Required prior to the pachytene stage to facilitate the production of multiple types of piRNAs, including those associated with repeats involved in the regulation of retrotransposons. May act by mediating protein-protein interactions during germ cell maturation. This is Ankyrin repeat, SAM and basic leucine zipper domain-containing protein 1 (ASZ1) from Pongo abelii (Sumatran orangutan).